A 339-amino-acid chain; its full sequence is Zinc metalloprotease MJ0392 (339 aa).

A run of 2 helical transmembrane segments spans residues 10-30 (IMGI…VIIG) and 33-53 (IMNN…SVVL). Residue His54 coordinates Zn(2+). Glu55 is a catalytic residue. His58 is a binding site for Zn(2+). The next 2 helical transmembrane spans lie at 96–116 (IAGP…SQFF) and 125–145 (LLYT…IPAF). Zn(2+) is bound at residue Asp148. 2 helical membrane-spanning segments follow: residues 180-200 (IMLL…SLFV) and 251-271 (YFGY…IGNI). CBS domains are found at residues 226–281 (MTPN…VRDY) and 281–335 (YMEK…ELKE).

The protein belongs to the peptidase M50B family. In terms of assembly, monomer. The cofactor is Zn(2+).

Its subcellular location is the cell membrane. Its activity is regulated as follows. Inhibited by 1,10-phenanthroline. Functionally, a site-2 regulated intramembrane protease (S2P) that cleaves type-2 transmembrane proteins within their membrane-spanning domains; its endogenous substrate is unknown. Regulated intramembrane proteolysis (RIP) occurs when an extracytoplasmic signal triggers a concerted proteolytic cascade to transmit information and elicit cellular responses. A membrane-spanning regulatory substrate protein is first cut extracytoplasmically (site-1 protease, S1P), then within the membrane itself (site-2 protease, S2P, this enzyme), while cytoplasmic proteases finish degrading the regulatory protein, liberating the effector protein. Possible signals, S1P and substrates are unknown in this organism. The protein is Zinc metalloprotease MJ0392 of Methanocaldococcus jannaschii (strain ATCC 43067 / DSM 2661 / JAL-1 / JCM 10045 / NBRC 100440) (Methanococcus jannaschii).